The chain runs to 234 residues: tRNA (guanine-N(1)-)-methyltransferase (234 aa).

Glycine 113 is an S-adenosyl-L-methionine binding site.

This sequence belongs to the RNA methyltransferase TrmD family. In terms of assembly, homodimer.

The protein resides in the cytoplasm. It carries out the reaction guanosine(37) in tRNA + S-adenosyl-L-methionine = N(1)-methylguanosine(37) in tRNA + S-adenosyl-L-homocysteine + H(+). In terms of biological role, specifically methylates guanosine-37 in various tRNAs. This chain is tRNA (guanine-N(1)-)-methyltransferase, found in Gluconobacter oxydans (strain 621H) (Gluconobacter suboxydans).